The following is a 181-amino-acid chain: ATP synthase subunit b, chloroplastic (181 aa).

The helical transmembrane segment at 31–50 (NVLNIAILLSGVVYLGRNFL) threads the bilayer.

It belongs to the ATPase B chain family. As to quaternary structure, F-type ATPases have 2 components, F(1) - the catalytic core - and F(0) - the membrane proton channel. F(1) has five subunits: alpha(3), beta(3), gamma(1), delta(1), epsilon(1). F(0) has four main subunits: a(1), b(1), b'(1) and c(10-14). The alpha and beta chains form an alternating ring which encloses part of the gamma chain. F(1) is attached to F(0) by a central stalk formed by the gamma and epsilon chains, while a peripheral stalk is formed by the delta, b and b' chains.

It is found in the plastid. It localises to the chloroplast thylakoid membrane. F(1)F(0) ATP synthase produces ATP from ADP in the presence of a proton or sodium gradient. F-type ATPases consist of two structural domains, F(1) containing the extramembraneous catalytic core and F(0) containing the membrane proton channel, linked together by a central stalk and a peripheral stalk. During catalysis, ATP synthesis in the catalytic domain of F(1) is coupled via a rotary mechanism of the central stalk subunits to proton translocation. In terms of biological role, component of the F(0) channel, it forms part of the peripheral stalk, linking F(1) to F(0). The sequence is that of ATP synthase subunit b, chloroplastic from Rhodomonas salina (Cryptomonas salina).